The following is a 167-amino-acid chain: Leukotoxin-activating lysine-acyltransferase LktC serotype A11 (167 aa).

Catalysis depends on residues His22 and Asp91.

Belongs to the RTX toxin acyltransferase family.

The protein localises to the cytoplasm. It catalyses the reaction a fatty acyl-[ACP] + L-lysyl-[protein] = N(6)-(fatty acyl)-L-lysyl-[protein] + holo-[ACP] + H(+). Functionally, involved in fatty acylation of the protoxin (LktA) at two internal lysine residues, thereby converting it to the active toxin. The polypeptide is Leukotoxin-activating lysine-acyltransferase LktC serotype A11 (lktC) (Mannheimia haemolytica (Pasteurella haemolytica)).